Reading from the N-terminus, the 570-residue chain is Methionine--tRNA ligase (570 aa).

The 'HIGH' region signature appears at 11 to 21 (PYVQTVPHLGN). Zn(2+) is bound by residues Cys-143, Cys-146, Cys-156, and Cys-159. Residues 333 to 337 (KFSKS) carry the 'KMSKS' region motif. Lys-336 is an ATP binding site.

This sequence belongs to the class-I aminoacyl-tRNA synthetase family. MetG type 1 subfamily. Requires Zn(2+) as cofactor.

It is found in the cytoplasm. It catalyses the reaction tRNA(Met) + L-methionine + ATP = L-methionyl-tRNA(Met) + AMP + diphosphate. Is required not only for elongation of protein synthesis but also for the initiation of all mRNA translation through initiator tRNA(fMet) aminoacylation. The sequence is that of Methionine--tRNA ligase from Pyrobaculum arsenaticum (strain DSM 13514 / JCM 11321 / PZ6).